A 201-amino-acid polypeptide reads, in one-letter code: Imidazoleglycerol-phosphate dehydratase (201 aa).

It belongs to the imidazoleglycerol-phosphate dehydratase family.

The protein resides in the cytoplasm. It carries out the reaction D-erythro-1-(imidazol-4-yl)glycerol 3-phosphate = 3-(imidazol-4-yl)-2-oxopropyl phosphate + H2O. It participates in amino-acid biosynthesis; L-histidine biosynthesis; L-histidine from 5-phospho-alpha-D-ribose 1-diphosphate: step 6/9. This is Imidazoleglycerol-phosphate dehydratase from Prochlorococcus marinus (strain MIT 9515).